We begin with the raw amino-acid sequence, 213 residues long: Ribonuclease HII (213 aa).

The RNase H type-2 domain occupies 18 to 213; sequence GLYAGVDEVG…RPVKERLAKN (196 aa). A divalent metal cation is bound by residues Asp24, Glu25, and Asp116.

It belongs to the RNase HII family. The cofactor is Mn(2+). Requires Mg(2+) as cofactor.

The protein localises to the cytoplasm. The enzyme catalyses Endonucleolytic cleavage to 5'-phosphomonoester.. Functionally, endonuclease that specifically degrades the RNA of RNA-DNA hybrids. This Shewanella sediminis (strain HAW-EB3) protein is Ribonuclease HII.